The primary structure comprises 367 residues: Phospho-N-acetylmuramoyl-pentapeptide-transferase (367 aa).

10 helical membrane passes run 16–36, 62–82, 87–107, 125–145, 158–178, 190–210, 214–234, 240–260, 264–284, and 326–346; these read LLLA…WVRF, TMGG…FNLV, MLLP…DDWL, FWIM…PQPY, VGEV…IVFI, SLAG…TFLA, LTNL…FLWY, QVFM…VVAL, QWLL…STMI, and FVLI…IFGP.

The protein belongs to the glycosyltransferase 4 family. MraY subfamily. Mg(2+) is required as a cofactor.

It localises to the cell membrane. The enzyme catalyses UDP-N-acetyl-alpha-D-muramoyl-L-alanyl-gamma-D-glutamyl-meso-2,6-diaminopimeloyl-D-alanyl-D-alanine + di-trans,octa-cis-undecaprenyl phosphate = di-trans,octa-cis-undecaprenyl diphospho-N-acetyl-alpha-D-muramoyl-L-alanyl-D-glutamyl-meso-2,6-diaminopimeloyl-D-alanyl-D-alanine + UMP. The protein operates within cell wall biogenesis; peptidoglycan biosynthesis. Its function is as follows. Catalyzes the initial step of the lipid cycle reactions in the biosynthesis of the cell wall peptidoglycan: transfers peptidoglycan precursor phospho-MurNAc-pentapeptide from UDP-MurNAc-pentapeptide onto the lipid carrier undecaprenyl phosphate, yielding undecaprenyl-pyrophosphoryl-MurNAc-pentapeptide, known as lipid I. This is Phospho-N-acetylmuramoyl-pentapeptide-transferase from Chloroflexus aurantiacus (strain ATCC 29366 / DSM 635 / J-10-fl).